The chain runs to 75 residues: Large ribosomal subunit protein bL31 (75 aa).

Belongs to the bacterial ribosomal protein bL31 family. Type A subfamily. Part of the 50S ribosomal subunit.

Functionally, binds the 23S rRNA. This is Large ribosomal subunit protein bL31 from Bradyrhizobium sp. (strain BTAi1 / ATCC BAA-1182).